Reading from the N-terminus, the 405-residue chain is L-carnitine CoA-transferase (405 aa).

CoA-binding residues include Lys-97 and Arg-104. Asp-169 acts as the Nucleophile in catalysis.

The protein belongs to the CoA-transferase III family. CaiB subfamily. As to quaternary structure, homodimer.

It localises to the cytoplasm. It carries out the reaction crotonobetainyl-CoA + (R)-carnitine = crotonobetaine + (R)-carnitinyl-CoA. It catalyses the reaction 4-(trimethylamino)butanoyl-CoA + (R)-carnitine = (R)-carnitinyl-CoA + 4-(trimethylamino)butanoate. It functions in the pathway amine and polyamine metabolism; carnitine metabolism. Catalyzes the reversible transfer of the CoA moiety from gamma-butyrobetainyl-CoA to L-carnitine to generate L-carnitinyl-CoA and gamma-butyrobetaine. Is also able to catalyze the reversible transfer of the CoA moiety from gamma-butyrobetainyl-CoA or L-carnitinyl-CoA to crotonobetaine to generate crotonobetainyl-CoA. This chain is L-carnitine CoA-transferase, found in Salmonella choleraesuis (strain SC-B67).